Here is a 524-residue protein sequence, read N- to C-terminus: Cytochrome P450 4F12 (524 aa).

2 helical membrane passes run 19 to 39 and 87 to 107; these read WLLL…AWTY and GFTV…PDTI. Cys-468 is a heme binding site.

The protein belongs to the cytochrome P450 family. It depends on heme as a cofactor. As to expression, expressed in small intestine, liver, colon and heart.

It localises to the endoplasmic reticulum membrane. It is found in the microsome membrane. The enzyme catalyses an organic molecule + reduced [NADPH--hemoprotein reductase] + O2 = an alcohol + oxidized [NADPH--hemoprotein reductase] + H2O + H(+). It catalyses the reaction (5Z,8Z,11Z,14Z)-eicosatetraenoate + reduced [NADPH--hemoprotein reductase] + O2 = 18-hydroxy-(5Z,8Z,11Z,14Z)-eicosatetraenoate + oxidized [NADPH--hemoprotein reductase] + H2O + H(+). It carries out the reaction (7Z,10Z,13Z,16Z,19Z)-docosapentaenoate + reduced [NADPH--hemoprotein reductase] + O2 = 10,11-epoxy-(7Z,13Z,16Z,19Z)-docosatetraenoate + oxidized [NADPH--hemoprotein reductase] + H2O + H(+). The catalysed reaction is (7Z,10Z,13Z,16Z,19Z)-docosapentaenoate + reduced [NADPH--hemoprotein reductase] + O2 = 13,14-epoxy-(7Z,10Z,16Z,19Z)-docosatetraenoate + oxidized [NADPH--hemoprotein reductase] + H2O + H(+). The enzyme catalyses (7Z,10Z,13Z,16Z,19Z)-docosapentaenoate + reduced [NADPH--hemoprotein reductase] + O2 = 16,17-epoxy-(7Z,10Z,13Z,19Z)-docosatetraenoate + oxidized [NADPH--hemoprotein reductase] + H2O + H(+). It catalyses the reaction (7Z,10Z,13Z,16Z,19Z)-docosapentaenoate + reduced [NADPH--hemoprotein reductase] + O2 = 19,20-epoxy-(7Z,10Z,13Z,16Z)-docosatetraenoate + oxidized [NADPH--hemoprotein reductase] + H2O + H(+). It carries out the reaction (4Z,7Z,10Z,13Z,16Z,19Z)-docosahexaenoate + reduced [NADPH--hemoprotein reductase] + O2 = 10,11-epoxy-(4Z,7Z,13Z,16Z,19Z)-docosapentaenoate + oxidized [NADPH--hemoprotein reductase] + H2O + H(+). The catalysed reaction is (4Z,7Z,10Z,13Z,16Z,19Z)-docosahexaenoate + reduced [NADPH--hemoprotein reductase] + O2 = 13,14-epoxy-(4Z,7Z,10Z,16Z,19Z)-docosapentaenoate + oxidized [NADPH--hemoprotein reductase] + H2O + H(+). The enzyme catalyses (4Z,7Z,10Z,13Z,16Z,19Z)-docosahexaenoate + reduced [NADPH--hemoprotein reductase] + O2 = 16,17-epoxy-(4Z,7Z,10Z,13Z,19Z)-docosapentaenoate + oxidized [NADPH--hemoprotein reductase] + H2O + H(+). It catalyses the reaction (4Z,7Z,10Z,13Z,16Z,19Z)-docosahexaenoate + reduced [NADPH--hemoprotein reductase] + O2 = 19,20-epoxy-(4Z,7Z,10Z,13Z,16Z)-docosapentaenoate + oxidized [NADPH--hemoprotein reductase] + H2O + H(+). It functions in the pathway lipid metabolism; arachidonate metabolism. Functionally, a cytochrome P450 monooxygenase involved in the metabolism of endogenous polyunsaturated fatty acids (PUFAs). Mechanistically, uses molecular oxygen inserting one oxygen atom into a substrate, and reducing the second into a water molecule, with two electrons provided by NADPH via cytochrome P450 reductase (CPR; NADPH-ferrihemoprotein reductase). Catalyzes the hydroxylation of carbon hydrogen bonds, with preference for omega-2 position. Metabolizes (5Z,8Z,11Z,14Z)-eicosatetraenoic acid (arachidonate) toward 18-hydroxy arachidonate. Catalyzes the epoxidation of double bonds of PUFAs such as docosapentaenoic and docosahexaenoic acids. Has low omega-hydroxylase activity toward leukotriene B4 and arachidonate. Involved in the metabolism of xenobiotics. Catalyzes the hydroxylation of the antihistamine drug ebastine. The sequence is that of Cytochrome P450 4F12 from Homo sapiens (Human).